Reading from the N-terminus, the 329-residue chain is MATGQKLMSAIRVFKFGGPEVMKLQSDVAIPIPKDNQVLIKVHACGVNPVDTYIRSGTHNMKPLLPYTPGLDVAGIVEAVGEHVSSFKKGDRVFTVSTLSGGYAEYALAADDTVYMLPEKLDFKQGAAIGIPYFTACLALLHSACVKAGEIVLIHGASGGVGIAACQIARAYGLKVLGTAGTEEGQNIVLQNGAHEVFNHREVNYIDKIKKSVGEKGIDVIIEMLANVNLSNDLNLLSHGGRVIIVGSRGPIEINPRDTMTKGSSIKGVALYSSTKEEFQQLAAALQAGMEVGWLRPVIGPVYPLEKAAQAHEDIIHSRGATGKMILLL.

The residue at position 2 (Ala2) is an N-acetylalanine. Lys23 carries the post-translational modification N6-acetyllysine. Residues Tyr53, 158–161 (SGGV), Gly181, His200, Asn229, 246–249 (VGSR), and 269–271 (VAL) each bind NADP(+). Ser248 bears the Phosphoserine mark.

The protein belongs to the zinc-containing alcohol dehydrogenase family. Quinone oxidoreductase subfamily. As to quaternary structure, homotetramer.

Its subcellular location is the cytoplasm. The catalysed reaction is 2 a quinone + NADPH + H(+) = 2 a 1,4-benzosemiquinone + NADP(+). Functionally, does not have alcohol dehydrogenase activity. Binds NADP and acts through a one-electron transfer process. Orthoquinones, such as 1,2-naphthoquinone or 9,10-phenanthrenequinone, are the best substrates (in vitro). May act in the detoxification of xenobiotics. Interacts with (AU)-rich elements (ARE) in the 3'-UTR of target mRNA species and enhances their stability. NADPH binding interferes with mRNA binding. This Sus scrofa (Pig) protein is Quinone oxidoreductase (CRYZ).